The primary structure comprises 218 residues: Holliday junction branch migration complex subunit RuvA (218 aa).

The domain I stretch occupies residues 1–64 (MIGKITGRLE…EDVMQLFGFT (64 aa)). Residues 65–143 (TLTEKEWHRL…SVMGMSDTQA (79 aa)) are domain II. The tract at residues 144 to 164 (TVAAQSSDAVIETRAAPSPVV) is flexible linker. The domain III stretch occupies residues 165–218 (QNPSAQAEALSALSNLGYAPGDAAAAVAQAAGELPDAETPDLIRAALKRLAPKG).

This sequence belongs to the RuvA family. As to quaternary structure, homotetramer. Forms an RuvA(8)-RuvB(12)-Holliday junction (HJ) complex. HJ DNA is sandwiched between 2 RuvA tetramers; dsDNA enters through RuvA and exits via RuvB. An RuvB hexamer assembles on each DNA strand where it exits the tetramer. Each RuvB hexamer is contacted by two RuvA subunits (via domain III) on 2 adjacent RuvB subunits; this complex drives branch migration. In the full resolvosome a probable DNA-RuvA(4)-RuvB(12)-RuvC(2) complex forms which resolves the HJ.

The protein resides in the cytoplasm. The RuvA-RuvB-RuvC complex processes Holliday junction (HJ) DNA during genetic recombination and DNA repair, while the RuvA-RuvB complex plays an important role in the rescue of blocked DNA replication forks via replication fork reversal (RFR). RuvA specifically binds to HJ cruciform DNA, conferring on it an open structure. The RuvB hexamer acts as an ATP-dependent pump, pulling dsDNA into and through the RuvAB complex. HJ branch migration allows RuvC to scan DNA until it finds its consensus sequence, where it cleaves and resolves the cruciform DNA. The sequence is that of Holliday junction branch migration complex subunit RuvA from Roseobacter denitrificans (strain ATCC 33942 / OCh 114) (Erythrobacter sp. (strain OCh 114)).